Here is a 276-residue protein sequence, read N- to C-terminus: Putative pyridoxine kinase (276 aa).

Asn-139 serves as a coordination point for ATP. Glu-142 contributes to the Mg(2+) binding site. ATP-binding positions include 176–180, Asp-188, Gly-213, and Lys-238; that span reads KGGKA.

The protein belongs to the ThiD family.

The enzyme catalyses pyridoxal + ATP = pyridoxal 5'-phosphate + ADP + H(+). Functionally, phosphorylates B6 vitamers; functions in a salvage pathway. Uses pyridoxal, pyridoxine, and pyridoxamine as substrates. The sequence is that of Putative pyridoxine kinase (pdxK) from Staphylococcus epidermidis (strain ATCC 12228 / FDA PCI 1200).